We begin with the raw amino-acid sequence, 260 residues long: Adenosylcobinamide-GDP ribazoletransferase (260 aa).

6 consecutive transmembrane segments (helical) span residues 7-27 (WYFL…TRLP), 45-65 (LMGL…HWLG), 117-137 (AYGV…LASF), 145-165 (WALI…IALY), 187-207 (LLLG…ALAI), and 210-230 (WLIL…GRWF).

Belongs to the CobS family. Mg(2+) serves as cofactor.

It localises to the cell inner membrane. It catalyses the reaction alpha-ribazole + adenosylcob(III)inamide-GDP = adenosylcob(III)alamin + GMP + H(+). It carries out the reaction alpha-ribazole 5'-phosphate + adenosylcob(III)inamide-GDP = adenosylcob(III)alamin 5'-phosphate + GMP + H(+). It functions in the pathway cofactor biosynthesis; adenosylcobalamin biosynthesis; adenosylcobalamin from cob(II)yrinate a,c-diamide: step 7/7. Its function is as follows. Joins adenosylcobinamide-GDP and alpha-ribazole to generate adenosylcobalamin (Ado-cobalamin). Also synthesizes adenosylcobalamin 5'-phosphate from adenosylcobinamide-GDP and alpha-ribazole 5'-phosphate. The protein is Adenosylcobinamide-GDP ribazoletransferase of Synechocystis sp. (strain ATCC 27184 / PCC 6803 / Kazusa).